The following is a 2145-amino-acid chain: Mediator of RNA polymerase II transcription subunit 12-like protein (2145 aa).

A disordered region spans residues 1-30 (MAAFGLLSYEQRPLKRPRLGPPDVYPQDPK). Thr462 is subject to Phosphothreonine. Over residues 1436 to 1455 (ELEKGQHLGSSSKKERDRQK) the composition is skewed to basic and acidic residues. 3 disordered regions span residues 1436-1460 (ELEK…KSMS), 1721-1802 (RSYY…ISSQ), and 2029-2145 (DAVL…PSHF). Over residues 1768 to 1777 (TKGRKRKTKS) the composition is skewed to basic residues. Positions 2052 to 2069 (RQPQVRQQQRLLQMQQPQ) are enriched in low complexity. Pro residues predominate over residues 2070-2079 (QPQPQQPPQP). Residues 2089–2099 (TLGLQAMQPQQ) are compositionally biased toward polar residues. Residues 2104-2124 (RQGLQQTQQQQQTAALVRQLQ) show a composition bias toward low complexity. Over residues 2125–2136 (KQLSSNQPQQGV) the composition is skewed to polar residues.

This sequence belongs to the Mediator complex subunit 12 family. As to quaternary structure, may be a component of the Mediator complex, which is known to be composed of MED1, MED4, MED6, MED7, MED8, MED9, MED10, MED11, MED12, MED13, MED13L, MED14, MED15, MED16, MED17, MED18, MED19, MED20, MED21, MED22, MED23, MED24, MED25, MED26, MED27, MED29, MED30, MED31, CCNC, CDK8 and CDC2L6/CDK11. The MED12, MED13, CCNC and CDK8 subunits form a distinct module termed the CDK8 module. Mediator containing the CDK8 module is less active than Mediator lacking this module in supporting transcriptional activation. Individual preparations of the Mediator complex lacking one or more distinct subunits have been variously termed ARC, CRSP, DRIP, PC2, SMCC and TRAP.

The protein localises to the nucleus. In terms of biological role, may be a component of the Mediator complex, a coactivator involved in the regulated transcription of nearly all RNA polymerase II-dependent genes. Mediator functions as a bridge to convey information from gene-specific regulatory proteins to the basal RNA polymerase II transcription machinery. Mediator is recruited to promoters by direct interactions with regulatory proteins and serves as a scaffold for the assembly of a functional preinitiation complex with RNA polymerase II and the general transcription factors. The chain is Mediator of RNA polymerase II transcription subunit 12-like protein (MED12L) from Homo sapiens (Human).